A 369-amino-acid chain; its full sequence is UDP-3-O-(3-hydroxymyristoyl)glucosamine N-acyltransferase (369 aa).

The active-site Proton acceptor is His240.

The protein belongs to the transferase hexapeptide repeat family. LpxD subfamily. In terms of assembly, homotrimer.

The enzyme catalyses a UDP-3-O-[(3R)-3-hydroxyacyl]-alpha-D-glucosamine + a (3R)-hydroxyacyl-[ACP] = a UDP-2-N,3-O-bis[(3R)-3-hydroxyacyl]-alpha-D-glucosamine + holo-[ACP] + H(+). The catalysed reaction is UDP-3-O-[(3R)-3-hydroxytetradecanoyl]-alpha-D-glucosamine + (3R)-hydroxytetradecanoyl-[ACP] = UDP-2-N,3-O-bis[(3R)-3-hydroxytetradecanoyl]-alpha-D-glucosamine + holo-[ACP] + H(+). It functions in the pathway glycolipid biosynthesis; lipid IV(A) biosynthesis; lipid IV(A) from (3R)-3-hydroxytetradecanoyl-[acyl-carrier-protein] and UDP-N-acetyl-alpha-D-glucosamine: step 3/6. Its function is as follows. Catalyzes the N-acylation of UDP-3-O-(hydroxytetradecanoyl)glucosamine using 3-hydroxytetradecanoyl-ACP as the acyl donor. Is involved in the biosynthesis of lipid A, a phosphorylated glycolipid that anchors the lipopolysaccharide to the outer membrane of the cell. This chain is UDP-3-O-(3-hydroxymyristoyl)glucosamine N-acyltransferase, found in Blochmanniella floridana.